Consider the following 248-residue polypeptide: Large ribosomal subunit protein uL2 (248 aa).

A disordered region spans residues 203 to 248 (AHPAGGGHHPKGLTPAPRNAPPGRKVGHIAPRRTGRKKGASRTPTQ). Residues 227–242 (KVGHIAPRRTGRKKGA) show a composition bias toward basic residues.

The protein belongs to the universal ribosomal protein uL2 family. As to quaternary structure, part of the 50S ribosomal subunit. Forms a bridge to the 30S subunit in the 70S ribosome.

Functionally, one of the primary rRNA binding proteins. Required for association of the 30S and 50S subunits to form the 70S ribosome, for tRNA binding and peptide bond formation. It has been suggested to have peptidyltransferase activity; this is somewhat controversial. Makes several contacts with the 16S rRNA in the 70S ribosome. This Thermofilum pendens (strain DSM 2475 / Hrk 5) protein is Large ribosomal subunit protein uL2.